The primary structure comprises 105 residues: Large ribosomal subunit protein bL21 (105 aa).

The protein belongs to the bacterial ribosomal protein bL21 family. Part of the 50S ribosomal subunit. Contacts protein L20.

Functionally, this protein binds to 23S rRNA in the presence of protein L20. This Rhizobium etli (strain ATCC 51251 / DSM 11541 / JCM 21823 / NBRC 15573 / CFN 42) protein is Large ribosomal subunit protein bL21.